Here is a 71-residue protein sequence, read N- to C-terminus: Gas vesicle protein A (71 aa).

The segment at leucine 12–lysine 22 is alpha helix 1. The segment at isoleucine 26–leucine 34 is beta-strand 1. Residues valine 35–isoleucine 37 form a beta turn region. The interval glutamate 38 to valine 46 is beta-strand 2. Residues valine 51–alanine 70 are alpha helix 2.

The protein belongs to the gas vesicle GvpA family. In terms of assembly, the gas vesicle shell is 2 nm thick and consists of a single layer of this protein. It forms helical ribs nearly perpendicular to the long axis of the vesicle.

The protein localises to the gas vesicle shell. Its function is as follows. Gas vesicles are hollow, gas filled proteinaceous nanostructures found in some microorganisms. During planktonic growth they allow positioning of the organism at a favorable depth for light or nutrient acquisition. GvpA forms the protein shell. This Microcystis sp. (strain BC 84/1) protein is Gas vesicle protein A.